The primary structure comprises 326 residues: Peroxidase 6 (326 aa).

Residues 1 to 20 form the signal peptide; that stretch reads MKSFGLCLFILVSSPCLLQA. Asn-21 is a glycosylation site (N-linked (GlcNAc...) asparagine). 4 disulfides stabilise this stretch: Cys-31-Cys-112, Cys-64-Cys-69, Cys-118-Cys-318, and Cys-197-Cys-228. Residue His-62 is the Proton acceptor of the active site. Positions 63, 66, 68, 70, and 72 each coordinate Ca(2+). The N-linked (GlcNAc...) asparagine glycan is linked to Asn-163. Residue His-190 coordinates heme b. Thr-191 provides a ligand contact to Ca(2+). 2 N-linked (GlcNAc...) asparagine glycosylation sites follow: Asn-206 and Asn-230. Residues Asp-242, Thr-245, and Asp-250 each coordinate Ca(2+). Asn-274 is a glycosylation site (N-linked (GlcNAc...) asparagine).

Belongs to the peroxidase family. Classical plant (class III) peroxidase subfamily. Heme b is required as a cofactor. The cofactor is Ca(2+).

It is found in the secreted. The catalysed reaction is 2 a phenolic donor + H2O2 = 2 a phenolic radical donor + 2 H2O. In terms of biological role, removal of H(2)O(2), oxidation of toxic reductants, biosynthesis and degradation of lignin, suberization, auxin catabolism, response to environmental stresses such as wounding, pathogen attack and oxidative stress. These functions might be dependent on each isozyme/isoform in each plant tissue. The polypeptide is Peroxidase 6 (PER6) (Arabidopsis thaliana (Mouse-ear cress)).